The primary structure comprises 156 residues: Small ribosomal subunit protein uS7c (156 aa).

This sequence belongs to the universal ribosomal protein uS7 family. In terms of assembly, part of the 30S ribosomal subunit.

The protein resides in the plastid. Its subcellular location is the chloroplast. In terms of biological role, one of the primary rRNA binding proteins, it binds directly to 16S rRNA where it nucleates assembly of the head domain of the 30S subunit. In Zamia furfuracea (Cardboard cycad), this protein is Small ribosomal subunit protein uS7c (rps7).